A 2371-amino-acid polypeptide reads, in one-letter code: NBAS subunit of NRZ tethering complex (2371 aa).

The interval 1-1035 (MAAPESGPAL…KTEATTKLHD (1035 aa)) is interaction with USE1. WD repeat units lie at residues 130–169 (DPKPQWRRVAWSYDCTLLAYAESTGTVRVFDLMGSELFVI) and 316–355 (QEQDGIFKMSLSPDGMLLAAIHFSGKLSIWAIPSLKQQGE). Ser-473 and Ser-475 each carry phosphoserine. The tract at residues 1036-2371 (MVDQLEQILS…TALRAAQHWV (1336 aa)) is interaction with ZW10 and RINT1. Lys-1057 is subject to N6-acetyllysine.

Component of the NRZ complex composed of NBAS, ZW10 and RINT1/TIP20L; NRZ associates with SNAREs STX18, USE1, BNIP1/SEC20L and SEC22B (the assembly has been described as syntaxin 18 complex); links NRZ to SNARE USE1. In terms of tissue distribution, broadly expressed, with highest levels in heart and skeletal muscle, and lowest levels in liver, small intestine and thymus. Well expressed in retinal ganglion cells, epidermal skin cells, and leukocytes. Up-regulated together with N-myc in some neuroblastoma cell lines.

It is found in the cytoplasm. It localises to the endoplasmic reticulum. The protein localises to the endoplasmic reticulum membrane. Functionally, involved in Golgi-to-endoplasmic reticulum (ER) retrograde transport; the function is proposed to depend on its association in the NRZ complex which is believed to play a role in SNARE assembly at the ER. Required for normal embryonic development. May play a role in the nonsense-mediated decay pathway of mRNAs containing premature stop codons. The chain is NBAS subunit of NRZ tethering complex from Homo sapiens (Human).